A 145-amino-acid chain; its full sequence is Mannitol-specific phosphotransferase enzyme IIA component (145 aa).

Positions 2–145 constitute a PTS EIIA type-2 domain; sequence ENLTNISIEL…EEITENLAIA (144 aa). Catalysis depends on histidine 62, which acts as the Tele-phosphohistidine intermediate. The residue at position 62 (histidine 62) is a Phosphohistidine; by HPr.

The protein resides in the cytoplasm. In terms of biological role, the phosphoenolpyruvate-dependent sugar phosphotransferase system (sugar PTS), a major carbohydrate active transport system, catalyzes the phosphorylation of incoming sugar substrates concomitantly with their translocation across the cell membrane. The enzyme II CmtAB PTS system is involved in D-mannitol transport. The polypeptide is Mannitol-specific phosphotransferase enzyme IIA component (Enterococcus faecalis (strain ATCC 700802 / V583)).